Reading from the N-terminus, the 155-residue chain is Transcriptional repressor NrdR (155 aa).

Residues 3–34 (CPFCGNIDTQVKDSRPAEDHVSIRRRRFCPAC) fold into a zinc finger. Residues 49 to 139 (LVVIKSSGKR…VYKNFQAADD (91 aa)) enclose the ATP-cone domain.

This sequence belongs to the NrdR family. Zn(2+) is required as a cofactor.

In terms of biological role, negatively regulates transcription of bacterial ribonucleotide reductase nrd genes and operons by binding to NrdR-boxes. In Cereibacter sphaeroides (strain ATCC 17029 / ATH 2.4.9) (Rhodobacter sphaeroides), this protein is Transcriptional repressor NrdR.